The sequence spans 505 residues: Maturase K (505 aa).

Belongs to the intron maturase 2 family. MatK subfamily.

It is found in the plastid. It localises to the chloroplast. Usually encoded in the trnK tRNA gene intron. Probably assists in splicing its own and other chloroplast group II introns. This chain is Maturase K, found in Portulacaria afra (Elephant's food).